The sequence spans 189 residues: GTP cyclohydrolase 1 (189 aa).

Residues C79, H82, and C151 each contribute to the Zn(2+) site.

This sequence belongs to the GTP cyclohydrolase I family. Toroid-shaped homodecamer, composed of two pentamers of five dimers.

It carries out the reaction GTP + H2O = 7,8-dihydroneopterin 3'-triphosphate + formate + H(+). It participates in cofactor biosynthesis; 7,8-dihydroneopterin triphosphate biosynthesis; 7,8-dihydroneopterin triphosphate from GTP: step 1/1. This chain is GTP cyclohydrolase 1, found in Lactiplantibacillus plantarum (strain ATCC BAA-793 / NCIMB 8826 / WCFS1) (Lactobacillus plantarum).